A 498-amino-acid chain; its full sequence is MPEEYLNAQKMEKLERIKSRGINPYPSTFHPSHTSAQAVALLVEIETQENHLKEVLKLAGRIMTRRDMGKISFMDIRDGSGKMQIFFRQNDLDEASIELLKDLDLGDFIGVEGSLMRTRTGEPSLAATKVSMLSKSLLPLPEKWHGLQDVEKRYRQRYLDLISNADARQTFLTRSRVISVIRAFMNAKGFLEVETPVLQPEAGGALARPFITHHQALNCDFYMRIALELHLKRLIVGGFDRVYEIGRIFRNEGISTRHNPEFTMMESYQAYANYKDVMDFLEEMVSSVVKEISGGYTLPFGDITLDFTPPWPRLTMRDAVKQYAGIDFFDFPTKETLAAEMTRRKLKVDPAKDWGKLVDELVGEFVEPHLVQPTFLTDHPVAMSPLAKQKPEDPRLTERFEAICANMEIANAFSELNDPVEQRARFKEQLEKRSQLRTDESESVDEDFLAALAYGMPPTGGLGVGIDRLVMLFTNHDSIREVILFPALKDREDTKTQE.

2 residues coordinate Mg(2+): E401 and E408.

Belongs to the class-II aminoacyl-tRNA synthetase family. As to quaternary structure, homodimer. Mg(2+) is required as a cofactor.

Its subcellular location is the cytoplasm. It carries out the reaction tRNA(Lys) + L-lysine + ATP = L-lysyl-tRNA(Lys) + AMP + diphosphate. This Dehalococcoides mccartyi (strain ATCC BAA-2100 / JCM 16839 / KCTC 5957 / BAV1) protein is Lysine--tRNA ligase.